A 208-amino-acid polypeptide reads, in one-letter code: Ras-related protein M-Ras (208 aa).

Residues D21, G22, G23, V24, G25, K26, S27, A28, F38, V39, P40, Y42, P44, and T45 each contribute to the GTP site. S27 serves as a coordination point for Mg(2+). The Effector region signature appears at 42–50 (YDPTIEDSY). Mg(2+) is bound by residues T45 and D67. GTP-binding residues include G70, N126, K127, D129, S156, A157, and K158. C205 carries the post-translational modification Cysteine methyl ester. The S-geranylgeranyl cysteine moiety is linked to residue C205. The propeptide at 206–208 (VIL) is removed in mature form.

The protein belongs to the small GTPase superfamily. Ras family. In terms of assembly, component of the SHOC2-MRAS-PP1c (SMP) holophosphatase complex consisting of SHOC2, GTP-bound M-Ras/MRAS and the catalytic subunit of protein phosphatase 1 (either PPP1CA, PPP1CB or PPP1CC). Interacts (active GTP-bound form) with both SHOC2 and PP1c (all isoforms) to form a tertiary complex; SHOC2 and PP1c preferably bind M-Ras/MRAS, but they also bind K-Ras/KRAS, N-Ras/NRAS and H-Ras/HRAS. Interacts with RGL3. Interacts (active GTP-bound form preferentially) with RGS14. Requires Mg(2+) as cofactor. As to expression, expressed in skeletal muscle cells.

It localises to the cell membrane. The catalysed reaction is GTP + H2O = GDP + phosphate + H(+). Its function is as follows. Signal transducer in the Ras-MAPK signaling pathway that regulates cell proliferation and survival. Core component of the SHOC2-MRAS-PP1c (SMP) holophosphatase complex that regulates the MAPK pathway activation. The formation of the SMP complex only occurs when MRAS is GTP-bound. MRAS has low intrinsic GTPase activity and may require additional factors for activation. The SMP complex specifically dephosphorylates the inhibitory phosphorylation at 'Ser-259' of RAF1 kinase, 'Ser-365' of BRAF kinase and 'Ser-214' of ARAF kinase, stimulating their kinase activities. This chain is Ras-related protein M-Ras (Mras), found in Rattus norvegicus (Rat).